The following is a 259-amino-acid chain: Major cell-binding factor (259 aa).

The signal sequence occupies residues 1–26 (MVFRKSLLKLAVFALGACVAFSNANA).

This sequence belongs to the bacterial solute-binding protein 3 family.

The protein localises to the cell surface. Its function is as follows. Common antigen and a major cell adherence molecule. Most probably involved, with PEB1C, in a binding-protein-dependent transport system for an amino acid. May be involved in binding to intestinal cells. This Campylobacter jejuni subsp. jejuni serotype O:2 (strain ATCC 700819 / NCTC 11168) protein is Major cell-binding factor (peb1A).